The following is a 176-amino-acid chain: NAD(P)H-quinone oxidoreductase subunit 6, chloroplastic (176 aa).

5 helical membrane passes run 10–30 (FLLVFLGSGLILGGLGVVLLT), 32–52 (PIYSAFSLGLVFVCISLFYIP), 61–81 (AQLLIYVGAINVLIIFAVMFM), 93–115 (WTVGDGVTSVVCTSIFASLITTI), and 152–172 (FFLPFELISIILLVALIGAIA).

It belongs to the complex I subunit 6 family. As to quaternary structure, NDH is composed of at least 16 different subunits, 5 of which are encoded in the nucleus.

It localises to the plastid. The protein localises to the chloroplast thylakoid membrane. It catalyses the reaction a plastoquinone + NADH + (n+1) H(+)(in) = a plastoquinol + NAD(+) + n H(+)(out). The catalysed reaction is a plastoquinone + NADPH + (n+1) H(+)(in) = a plastoquinol + NADP(+) + n H(+)(out). NDH shuttles electrons from NAD(P)H:plastoquinone, via FMN and iron-sulfur (Fe-S) centers, to quinones in the photosynthetic chain and possibly in a chloroplast respiratory chain. The immediate electron acceptor for the enzyme in this species is believed to be plastoquinone. Couples the redox reaction to proton translocation, and thus conserves the redox energy in a proton gradient. This is NAD(P)H-quinone oxidoreductase subunit 6, chloroplastic (ndhG) from Vitis vinifera (Grape).